Reading from the N-terminus, the 248-residue chain is Probable transcriptional regulatory protein Smed_2641 (248 aa).

Belongs to the TACO1 family.

Its subcellular location is the cytoplasm. In Sinorhizobium medicae (strain WSM419) (Ensifer medicae), this protein is Probable transcriptional regulatory protein Smed_2641.